We begin with the raw amino-acid sequence, 213 residues long: Orotate phosphoribosyltransferase (213 aa).

Lysine 26 is a binding site for 5-phospho-alpha-D-ribose 1-diphosphate. 34–35 serves as a coordination point for orotate; that stretch reads FF. Residues 72–73, arginine 99, lysine 100, lysine 103, histidine 105, and 124–132 each bind 5-phospho-alpha-D-ribose 1-diphosphate; these read YK and DDVITAGTA. Orotate-binding residues include threonine 128 and arginine 156.

The protein belongs to the purine/pyrimidine phosphoribosyltransferase family. PyrE subfamily. Homodimer. Mg(2+) is required as a cofactor.

The enzyme catalyses orotidine 5'-phosphate + diphosphate = orotate + 5-phospho-alpha-D-ribose 1-diphosphate. It participates in pyrimidine metabolism; UMP biosynthesis via de novo pathway; UMP from orotate: step 1/2. Catalyzes the transfer of a ribosyl phosphate group from 5-phosphoribose 1-diphosphate to orotate, leading to the formation of orotidine monophosphate (OMP). This Cronobacter sakazakii (strain ATCC BAA-894) (Enterobacter sakazakii) protein is Orotate phosphoribosyltransferase.